Reading from the N-terminus, the 279-residue chain is uncharacterized protein (279 aa).

It to M.tuberculosis Rv2569c.

This is an uncharacterized protein from Mycobacterium leprae (strain TN).